Consider the following 696-residue polypeptide: Elongation factor G (696 aa).

The region spanning 8-282 (KDYRNIGIMA…AVVDYLPSPL (275 aa)) is the tr-type G domain. GTP contacts are provided by residues 17 to 24 (AHIDAGKT), 81 to 85 (DTPGH), and 135 to 138 (NKMD).

This sequence belongs to the TRAFAC class translation factor GTPase superfamily. Classic translation factor GTPase family. EF-G/EF-2 subfamily.

It localises to the cytoplasm. In terms of biological role, catalyzes the GTP-dependent ribosomal translocation step during translation elongation. During this step, the ribosome changes from the pre-translocational (PRE) to the post-translocational (POST) state as the newly formed A-site-bound peptidyl-tRNA and P-site-bound deacylated tRNA move to the P and E sites, respectively. Catalyzes the coordinated movement of the two tRNA molecules, the mRNA and conformational changes in the ribosome. This chain is Elongation factor G, found in Mycoplasmopsis synoviae (strain 53) (Mycoplasma synoviae).